Here is a 215-residue protein sequence, read N- to C-terminus: Orotate phosphoribosyltransferase (215 aa).

Residue K26 participates in 5-phospho-alpha-D-ribose 1-diphosphate binding. Residue 34–35 participates in orotate binding; it reads FF. Residues 72-73, R99, K100, K103, H105, and 124-132 each bind 5-phospho-alpha-D-ribose 1-diphosphate; these read YK and DDVITAGTA. T128 and R156 together coordinate orotate.

This sequence belongs to the purine/pyrimidine phosphoribosyltransferase family. PyrE subfamily. In terms of assembly, homodimer. Mg(2+) is required as a cofactor.

It catalyses the reaction orotidine 5'-phosphate + diphosphate = orotate + 5-phospho-alpha-D-ribose 1-diphosphate. The protein operates within pyrimidine metabolism; UMP biosynthesis via de novo pathway; UMP from orotate: step 1/2. Catalyzes the transfer of a ribosyl phosphate group from 5-phosphoribose 1-diphosphate to orotate, leading to the formation of orotidine monophosphate (OMP). This Cellvibrio japonicus (strain Ueda107) (Pseudomonas fluorescens subsp. cellulosa) protein is Orotate phosphoribosyltransferase.